The following is a 406-amino-acid chain: MIGEIISVGDELLEGHVLNTNSQYLSQQLFQIGINVKYQQTIGDDFDSLVSAFNNSLNRSDVIILTGGLGPTRDDITKEAVSRSLNLNLLLDENEYQRIKSFFDHLQKRMSENNKKQAYIPEGAEVLINQIGTAPGIFIEQEDKIVAMLPGPPREMKTVFLNELKPRLIKNITAEGYYKSSIIKLIGIGESQVDEIIKEIKIPNCEIVPLALRHQVHLILKSYSQNQITAEEQLKRLENMLQHKLSSFIWGRDDDKLEEIVVNTLKDKGLSLAVAESMTGGLIAGKLTDVSGASNVFHGGVVAYTEDAKLNSLTVSQKVLEKYSHVSEETSYELAKQIREKFNTDIGLGITGYAGPEGERVGLFHTVIVGSTGKRHLSRILPGGRTDIKKGAVIQSLNELRKFLSD.

This sequence belongs to the CinA family.

The chain is Putative competence-damage inducible protein from Natranaerobius thermophilus (strain ATCC BAA-1301 / DSM 18059 / JW/NM-WN-LF).